The following is a 303-amino-acid chain: S-methyl-5'-thioadenosine phosphorylase 1 (303 aa).

Residues Ser14, 57-58 (RH), and 90-91 (SA) contribute to the phosphate site. Residue Met198 participates in substrate binding. Residue Ser199 participates in phosphate binding. Residue 222 to 224 (DYD) coordinates substrate.

Belongs to the PNP/MTAP phosphorylase family. MTAP subfamily. As to quaternary structure, homotrimer.

The protein localises to the cytoplasm. The protein resides in the nucleus. The catalysed reaction is S-methyl-5'-thioadenosine + phosphate = 5-(methylsulfanyl)-alpha-D-ribose 1-phosphate + adenine. The protein operates within amino-acid biosynthesis; L-methionine biosynthesis via salvage pathway; S-methyl-5-thio-alpha-D-ribose 1-phosphate from S-methyl-5'-thioadenosine (phosphorylase route): step 1/1. Its function is as follows. Catalyzes the reversible phosphorylation of S-methyl-5'-thioadenosine (MTA) to adenine and 5-methylthioribose-1-phosphate. Involved in the breakdown of MTA, a major by-product of polyamine biosynthesis. Responsible for the first step in the methionine salvage pathway after MTA has been generated from S-adenosylmethionine. Has broad substrate specificity with 6-aminopurine nucleosides as preferred substrates. This Puccinia graminis f. sp. tritici (strain CRL 75-36-700-3 / race SCCL) (Black stem rust fungus) protein is S-methyl-5'-thioadenosine phosphorylase 1.